We begin with the raw amino-acid sequence, 432 residues long: Cyclic GMP-AMP synthase-like receptor (432 aa).

ATP is bound by residues Ser-59 and 71 to 73; that span reads EFD. Glu-71, Asp-73, and Asp-205 together coordinate Mg(2+). GTP is bound by residues Asp-205 and 255–262; that span reads KQTCSVLE. Residues 259–262, Lys-284, and 303–307 each bind ATP; these read SVLE and TYALK.

This sequence belongs to the mab-21 family. Requires Mg(2+) as cofactor. Mn(2+) is required as a cofactor.

It catalyses the reaction GTP + ATP = 2',3'-cGAMP + 2 diphosphate. It carries out the reaction GTP + ATP = pppGp(2'-5')A + diphosphate. The enzyme catalyses pppGp(2'-5')A = 2',3'-cGAMP + diphosphate. Functionally, nucleotidyltransferase that catalyzes the formation of cyclic GMP-AMP (2',3'-cGAMP) from ATP and GTP and plays a key role in innate immunity. Directly binds some unknown ligand, activating the nucleotidyltransferase activity, leading to synthesis of 2',3'-cGAMP, a second messenger that binds to and activates Sting, thereby triggering the immune response via activation of the NF-kappa-B transcription factor. In Pocillopora damicornis (Cauliflower coral), this protein is Cyclic GMP-AMP synthase-like receptor.